The primary structure comprises 376 residues: Succinyl-diaminopimelate desuccinylase (376 aa).

His74 is a Zn(2+) binding site. Asp76 is an active-site residue. Asp105 is a Zn(2+) binding site. The Proton acceptor role is filled by Glu135. Residues Glu136, Glu164, and His349 each contribute to the Zn(2+) site.

This sequence belongs to the peptidase M20A family. DapE subfamily. As to quaternary structure, homodimer. Zn(2+) is required as a cofactor. Co(2+) serves as cofactor.

It catalyses the reaction N-succinyl-(2S,6S)-2,6-diaminopimelate + H2O = (2S,6S)-2,6-diaminopimelate + succinate. The protein operates within amino-acid biosynthesis; L-lysine biosynthesis via DAP pathway; LL-2,6-diaminopimelate from (S)-tetrahydrodipicolinate (succinylase route): step 3/3. In terms of biological role, catalyzes the hydrolysis of N-succinyl-L,L-diaminopimelic acid (SDAP), forming succinate and LL-2,6-diaminopimelate (DAP), an intermediate involved in the bacterial biosynthesis of lysine and meso-diaminopimelic acid, an essential component of bacterial cell walls. This Zymomonas mobilis subsp. mobilis (strain ATCC 31821 / ZM4 / CP4) protein is Succinyl-diaminopimelate desuccinylase.